Here is a 583-residue protein sequence, read N- to C-terminus: MPVTDRSVPSLLQERADQQPDSTAYTYIDYGSDPKGFADSLTWSQVYSRACIIAEELKLCGLPGDRVAVLAPQGLEYVLAFLGALQAGFIAVPLSTPQYGIHDDRVSAVLQDSKPVAILTTSSVVGDVTKYAASHDGQPAPVVVEVDLLDLDSPRQMPAFSRQHTGAAYLQYTSGSTRTPAGVIVSHTNVIANVTQSMYGYFGDPAKIPTGTVVSWLPLYHDMGLILGICAPLVARRRAMLMSPMSFLRRPARWMQLLATSGRCFSAAPNFAFELAVRRTSDQDMAGLDLRDVVGIVSGSERIHVATVRRFIERFAPYNLSPTAIRPSYGLAEATLYVAAPEAGAAPKTVRFDYEQLTAGQARPCGTDGSVGTELISYGSPDPSSVRIVNPETMVENPPGVVGEIWVHGDHVTMGYWQKPKQTAQVFDAKLVDPAPAAPEGPWLRTGDLGVISDGELFIMGRIKDLLIVDGRNHYPDDIEATIQEITGGRAAAIAVPDDITEQLVAIIEFKRRGSTAEEVMLKLRSVKREVTSAISKSHSLRVADLVLVSPGSIPITTSGKIRRSACVERYRSDGFKRLDVAV.

The protein belongs to the ATP-dependent AMP-binding enzyme family.

It catalyses the reaction holo-[(phenol)carboxyphthiodiolenone synthase] + a long-chain fatty acid + ATP = a long-chain fatty acyl-[(phenol)carboxyphthiodiolenone synthase] + AMP + diphosphate. The enzyme catalyses eicosanoate + holo-[(phenol)carboxyphthiodiolenone synthase] + ATP = icosanoyl-[(phenol)carboxyphthiodiolenone synthase] + AMP + diphosphate. The catalysed reaction is holo-[(phenol)carboxyphthiodiolenone synthase] + docosanoate + ATP = docosanoyl-[(phenol)carboxyphthiodiolenone synthase] + AMP + diphosphate. It participates in lipid metabolism; fatty acid biosynthesis. Its function is as follows. Catalyzes the activation of long-chain fatty acids as acyl-adenylates (acyl-AMP), which are then transferred to the multifunctional polyketide synthase PpsA for further chain extension. Catalyzes the adenylation of the long-chain fatty acids eicosanoate (C20) or docosanoate (C22), and potentially the very-long-chain fatty acid lignocerate (C24). Involved in the biosynthesis of phthiocerol dimycocerosate (DIM A) and phthiodiolone dimycocerosate (DIM B). This is Long-chain-fatty-acid--AMP ligase FadD26 (fadD26) from Mycobacterium tuberculosis (strain CDC 1551 / Oshkosh).